The primary structure comprises 138 residues: Small ribosomal subunit protein uS11c (138 aa).

The segment at 1-22 (MAKAIPKISSRRNGRIGSRKGA) is disordered. Basic residues predominate over residues 9–22 (SSRRNGRIGSRKGA).

This sequence belongs to the universal ribosomal protein uS11 family. In terms of assembly, part of the 30S ribosomal subunit.

It localises to the plastid. The protein localises to the chloroplast. The polypeptide is Small ribosomal subunit protein uS11c (Nicotiana tomentosiformis (Tobacco)).